Reading from the N-terminus, the 455-residue chain is UDP-N-acetylmuramoylalanine--D-glutamate ligase (455 aa).

Residue 118-124 (GSNAKST) participates in ATP binding.

Belongs to the MurCDEF family.

The protein resides in the cytoplasm. It catalyses the reaction UDP-N-acetyl-alpha-D-muramoyl-L-alanine + D-glutamate + ATP = UDP-N-acetyl-alpha-D-muramoyl-L-alanyl-D-glutamate + ADP + phosphate + H(+). Its pathway is cell wall biogenesis; peptidoglycan biosynthesis. In terms of biological role, cell wall formation. Catalyzes the addition of glutamate to the nucleotide precursor UDP-N-acetylmuramoyl-L-alanine (UMA). This chain is UDP-N-acetylmuramoylalanine--D-glutamate ligase, found in Chromohalobacter salexigens (strain ATCC BAA-138 / DSM 3043 / CIP 106854 / NCIMB 13768 / 1H11).